The chain runs to 245 residues: Phycocyanobilin:ferredoxin oxidoreductase (245 aa).

The protein belongs to the HY2 family.

The catalysed reaction is (2R,3Z)-phycocyanobilin + 4 oxidized [2Fe-2S]-[ferredoxin] = biliverdin IXalpha + 4 reduced [2Fe-2S]-[ferredoxin] + 4 H(+). Catalyzes the four-electron reduction of biliverdin IX-alpha (2-electron reduction at both the A and D rings); the reaction proceeds via an isolatable 2-electron intermediate, 181,182-dihydrobiliverdin. The protein is Phycocyanobilin:ferredoxin oxidoreductase of Microcystis aeruginosa (strain NIES-843 / IAM M-2473).